A 73-amino-acid chain; its full sequence is Translation initiation factor IF-1 (73 aa).

Residues 1 to 73 (MAKKDGAIEV…SRGRIVYRYK (73 aa)) form the S1-like domain.

It belongs to the IF-1 family. Component of the 30S ribosomal translation pre-initiation complex which assembles on the 30S ribosome in the order IF-2 and IF-3, IF-1 and N-formylmethionyl-tRNA(fMet); mRNA recruitment can occur at any time during PIC assembly.

The protein resides in the cytoplasm. In terms of biological role, one of the essential components for the initiation of protein synthesis. Stabilizes the binding of IF-2 and IF-3 on the 30S subunit to which N-formylmethionyl-tRNA(fMet) subsequently binds. Helps modulate mRNA selection, yielding the 30S pre-initiation complex (PIC). Upon addition of the 50S ribosomal subunit IF-1, IF-2 and IF-3 are released leaving the mature 70S translation initiation complex. This Mycolicibacterium smegmatis (strain ATCC 700084 / mc(2)155) (Mycobacterium smegmatis) protein is Translation initiation factor IF-1.